The sequence spans 281 residues: Bidirectional sugar transporter SWEET14 (281 aa).

The Extracellular segment spans residues 1-6 (MVLTHN). A helical membrane pass occupies residues 7-27 (VLAVTFGVLGNIISFIVFLAP). Residues 11–97 (TFGVLGNIIS…ILFITYANKK (87 aa)) form the MtN3/slv 1 domain. The Cytoplasmic segment spans residues 28–42 (VPTFVRICKKKSIEG). A helical membrane pass occupies residues 43–63 (FESLPYVSALFSAMLWIYYAL). Topologically, residues 64 to 70 (QKDGAGF) are extracellular. Residues 71-91 (LLITINAVGCFIETIYIILFI) form a helical membrane-spanning segment. The Cytoplasmic portion of the chain corresponds to 92-104 (TYANKKARISTLK). A helical membrane pass occupies residues 105–125 (VLGLLNFLGFAAIILVCELLT). At 126-132 (KGSNREK) the chain is on the extracellular side. A helical transmembrane segment spans residues 133-153 (VLGGICVGFSVCVFAAPLSIM). The region spanning 133-216 (VLGGICVGFS…MILYVIFKYY (84 aa)) is the MtN3/slv 2 domain. Over 154 to 166 (RVVIRTKSVEFMP) the chain is Cytoplasmic. A helical membrane pass occupies residues 167–187 (FSLSLFLTISAITWLFYGLAI). Topologically, residues 188 to 192 (KDFYV) are extracellular. Residues 193-213 (ALPNILGAFLGAVQMILYVIF) traverse the membrane as a helical segment. The Cytoplasmic portion of the chain corresponds to 214–281 (KYYKTPLVVD…EDQMDKKMPN (68 aa)). Over residues 244–259 (TPASGDLTVQPQTNPD) the composition is skewed to polar residues. Residues 244 to 281 (TPASGDLTVQPQTNPDVSHPIKTHGGDLEDQMDKKMPN) form a disordered region. Residues 267-281 (HGGDLEDQMDKKMPN) show a composition bias toward basic and acidic residues.

Belongs to the SWEET sugar transporter family. Forms homooligomers and/or heterooligomers.

It is found in the cell membrane. Mediates both low-affinity uptake and efflux of sugar across the plasma membrane. This chain is Bidirectional sugar transporter SWEET14, found in Arabidopsis thaliana (Mouse-ear cress).